We begin with the raw amino-acid sequence, 348 residues long: Tocopherol O-methyltransferase, chloroplastic (348 aa).

The N-terminal 51 residues, 1-51 (MKATLAAPSSLTSLPYRTNSSFGSKSSLLFRSPSSSSSVSMTTTRGNVAVA), are a transit peptide targeting the chloroplast. An N-acetylalanine modification is found at alanine 52. The tract at residues 130 to 139 (VVDVGCGIGG) is SAM motif I. Residues 193 to 201 (GKFDLVWSM) are SAM motif II. The interval 220–229 (VAAPGGRIII) is SAM motif III.

This sequence belongs to the class I-like SAM-binding methyltransferase superfamily. gTMT family.

Its subcellular location is the plastid. The protein localises to the chloroplast. The catalysed reaction is gamma-tocopherol + S-adenosyl-L-methionine = (+)-alpha-tocopherol + S-adenosyl-L-homocysteine + H(+). It carries out the reaction delta-tocotrienol + S-adenosyl-L-methionine = beta-tocotrienol + S-adenosyl-L-homocysteine + H(+). The enzyme catalyses gamma-tocotrienol + S-adenosyl-L-methionine = alpha-tocotrienol + S-adenosyl-L-homocysteine + H(+). It catalyses the reaction delta-tocopherol + S-adenosyl-L-methionine = beta-tocopherol + S-adenosyl-L-homocysteine + H(+). It participates in cofactor biosynthesis; tocopherol biosynthesis. In terms of biological role, involved in the synthesis of tocopherol (vitamin E). Methylates gamma- and delta-tocopherol to form beta- and alpha-tocopherol, respectively. The protein is Tocopherol O-methyltransferase, chloroplastic (VTE4) of Arabidopsis thaliana (Mouse-ear cress).